A 191-amino-acid polypeptide reads, in one-letter code: Gastrokine-3 (191 aa).

The first 30 residues, 1–30, serve as a signal peptide directing secretion; it reads MPLHSLERDNMRRLIAPSILVTVFLVPALA. N-linked (GlcNAc...) asparagine glycosylation is present at asparagine 33. The BRICHOS domain maps to 63-155; the sequence is NSVQSEWDGV…LCRAVPTYFA (93 aa). A disulfide bond links cysteine 90 and cysteine 147.

Belongs to the gastrokine family. Expressed in stomach. Present in mucus cells at the base of antral glands, and Brunner glands of the duodenum. Present at lower levels in the mucus neck cell region of the fundus (at protein level).

It is found in the secreted. In terms of biological role, inhibits gastric epithelial cell proliferation. In Mus musculus (Mouse), this protein is Gastrokine-3 (Gkn3).